A 254-amino-acid chain; its full sequence is UPF0603 protein YdjH (254 aa).

The N-terminal stretch at 1 to 29 (MRGFFGKAIFVVLAVFIMMPLLGIEAVRA) is a signal peptide. The chain crosses the membrane as a helical span at residues 166–186 (IFFTWWFQLIAAIAVGGIAVS). Basic and acidic residues predominate over residues 223-235 (VTRERKPSDKDSG). Residues 223–254 (VTRERKPSDKDSGSDGGVTKGGTSYSGSRGSF) are disordered. Over residues 243–254 (GGTSYSGSRGSF) the composition is skewed to polar residues.

It belongs to the UPF0603 family.

Its subcellular location is the cell membrane. The sequence is that of UPF0603 protein YdjH (ydjH) from Bacillus subtilis (strain 168).